The primary structure comprises 209 residues: Dual specificity phosphatase 29 (209 aa).

The region spanning 44 to 193 (NHVNEVWPNL…LRELDIQLAL (150 aa)) is the Tyrosine-protein phosphatase domain. 137-144 (NCAMGRSR) contributes to the substrate binding site. The active-site Phosphocysteine intermediate is the Cys138.

Belongs to the protein-tyrosine phosphatase family. Non-receptor class dual specificity subfamily.

The protein localises to the cytoplasm. The protein resides in the nucleus. It catalyses the reaction O-phospho-L-tyrosyl-[protein] + H2O = L-tyrosyl-[protein] + phosphate. The enzyme catalyses O-phospho-L-seryl-[protein] + H2O = L-seryl-[protein] + phosphate. The catalysed reaction is O-phospho-L-threonyl-[protein] + H2O = L-threonyl-[protein] + phosphate. In terms of biological role, dual specificity phosphatase able to dephosphorylate phosphotyrosine, phosphoserine and phosphothreonine residues within the same substrate, with a preference for phosphotyrosine as a substrate. Involved in the modulation of AMPK and MAPK1/2 signaling pathways. The sequence is that of Dual specificity phosphatase 29 (dusp29) from Xenopus tropicalis (Western clawed frog).